A 530-amino-acid chain; its full sequence is Dual specificity calcium/calmodulin-dependent 3',5'-cyclic nucleotide phosphodiesterase 1A (530 aa).

Calmodulin-binding stretches follow at residues 24 to 44 (TEKM…QLEK) and 114 to 137 (EKPR…MYRK). One can recognise a PDEase domain in the interval 142 to 508 (VGLAYPEAVI…ERWKELAAQG (367 aa)). His-219 serves as the catalytic Proton donor. Positions 223, 259, 260, and 366 each coordinate Zn(2+). Asp-260 provides a ligand contact to Mg(2+). Disordered regions lie at residues 450-471 (TKTP…NDGT) and 502-530 (KELA…ETHS). Polar residues predominate over residues 451 to 471 (KTPSYGASRRSNMKGTTNDGT). The span at 510–530 (PDPHKNSDLVNAEEKHAETHS) shows a compositional bias: basic and acidic residues.

This sequence belongs to the cyclic nucleotide phosphodiesterase family. PDE1 subfamily. Homodimer. Interacts with YWHAZ. It depends on Zn(2+) as a cofactor. Mg(2+) serves as cofactor.

The enzyme catalyses a nucleoside 3',5'-cyclic phosphate + H2O = a nucleoside 5'-phosphate + H(+). It carries out the reaction 3',5'-cyclic GMP + H2O = GMP + H(+). It catalyses the reaction 3',5'-cyclic AMP + H2O = AMP + H(+). Its activity is regulated as follows. Type I PDE are activated by the binding of calmodulin in the presence of Ca(2+). Its function is as follows. Calcium/calmodulin-dependent cyclic nucleotide phosphodiesterase with a dual specificity for the second messengers cGMP and cAMP, which are key regulators of many important physiological processes. Has a higher efficiency with cGMP compared to cAMP. In Bos taurus (Bovine), this protein is Dual specificity calcium/calmodulin-dependent 3',5'-cyclic nucleotide phosphodiesterase 1A.